The chain runs to 814 residues: MTSFQEVQLQTSNFAHVIFQNVAKSYLPNAHLECHYTLTPYIHPHSKDWVGIFKVGWSTARDYYTFLWSPMPEHYVEGSTVNCVLAFQGYYLPNDDGEFYQFCYVTHKGEIRGASTPFQFRAASPVEELLTMEDEGNSDMLVVTTKAGLLELKIEKTLKEKEELLKLIAVLEKETAQLREQVGRMERELSQEKGRCEQLQAEQKGLLEVSQSLRVENEEFMKRYSDATAKVQQLEEDIVSVTHKAIEKETDLDSLKDKLRKAQHEREQLECQLQTEKDEKELYKVHLKNTEIENTKLVSEIQTLKNLDGNKESMITHFKEEISKLQSCLADKENLYRALLLTTSNKEDTLFLKEQLRKAEEQVQATRQELIFLTKELSDAVNVRDKTMADLHTARLENERVKKQLADTLAELQLHAVKKDQEKTDTLEHELRREVEDLKLRLQMAADHYREKFKECQRLQKQINKLSDQAASTNSVFTKKMGSQQKVNDASINTDPAASTSASAVDVKPAASCAETGFDMSTKDHVCEMTKEIAEKIEKYNKCKQLLQDEKTKCNKYAEELAKMELKWKEQVKIAENVKLELAEVEDNYKVQLAEKEKEINGLASYLENLSREKELTKSLEDQKGRKLEGQSPQQVSRCLNTCSEQNGLLPPLSSAQPVLQYGNPYSAQETRDGADGAFYPDEIQRPPVRVPSWEDNVVCSQPARNLSRPDGLEDPEDSREDENVPIPPDPANQHLRSHGAGFCFDSSFDVHKKCPLCELMFPPNYDQTKFEEHVESHWKVCPMCSEQFPPDYDQQGFERHVQTHFDQNVLNFD.

Phosphoserine is present on residues Ser-124, Ser-138, and Ser-225. The stretch at 144–623 forms a coiled coil; it reads TTKAGLLELK…KELTKSLEDQ (480 aa). The segment at 320–420 is oligomerization; the sequence is EEISKLQSCL…ELQLHAVKKD (101 aa). Ser-619 is subject to Phosphoserine; by IKKA. A Phosphoserine modification is found at Ser-632. Ser-693 carries the post-translational modification Phosphoserine; by IKKA. Residues 701 to 733 are disordered; the sequence is SQPARNLSRPDGLEDPEDSREDENVPIPPDPAN. UBZ1-type zinc fingers lie at residues 752-778 and 779-805; these read HKKC…VESH and WKVC…VQTH. Cys-755, Cys-758, His-774, His-778, Cys-782, Cys-785, His-801, and His-805 together coordinate Zn(2+).

Homooligomer. Interacts with TNFAIP3. Interacts with STARD13. Interacts with MYO6. Interacts with TOM1; the interaction is indirect and is mediated by MYO6, which acts as a bridge between TOM1 and TAX1BP1. Interacts with MAVS; this interaction induces MAVS polyubiquitination. Interacts with TNIP1. Interacts with TRAF6; this interaction mediates deubiquitination of TRAF6 and inhibition of NF-kappa-B activation. Interacts with RIPK1; this interaction negatively regulates RIPK1 ubiquitination. Interacts with NBR1. Interacts with TBK1. Interacts with RB1CC1. Interacts with SQSTM1. Interacts with AZI2. Interacts with TICAM1 and TRIM32; these interactions target TICAM1 to TAX1BP1-mediated selective autophagic degradation. In terms of processing, phosphorylated in the C-terminal region by CHUK/IKKA leading to NF-kappa-B signaling down-regulation.

The protein localises to the cytoplasm. Its subcellular location is the mitochondrion. It localises to the preautophagosomal structure. The protein resides in the cytoplasmic vesicle. It is found in the autophagosome. In terms of biological role, ubiquitin-binding adapter that participates in inflammatory, antiviral and innate immune processes as well as selective autophagy regulation. Plays a key role in the negative regulation of NF-kappa-B and IRF3 signalings by acting as an adapter for the ubiquitin-editing enzyme A20/TNFAIP3 to bind and inactivate its substrates. Disrupts the interactions between the E3 ubiquitin ligase TRAF3 and TBK1/IKBKE to attenuate 'Lys63'-linked polyubiquitination of TBK1 and thereby IFN-beta production. Also recruits A20/TNFAIP3 to ubiquitinated signaling proteins TRAF6 and RIPK1, leading to their deubiquitination and disruption of IL-1 and TNF-induced NF-kappa-B signaling pathways. Inhibits virus-induced apoptosis by inducing the 'Lys-48'-linked polyubiquitination and degradation of MAVS via recruitment of the E3 ligase ITCH, thereby attenuating MAVS-mediated apoptosis signaling. As a macroautophagy/autophagy receptor, facilitates the xenophagic clearance of pathogenic bacteria such as Salmonella typhimurium and Mycobacterium tuberculosis. Upon NBR1 recruitment to the SQSTM1-ubiquitin condensates, acts as the major recruiter of RB1CC1 to these ubiquitin condensates to promote their autophagic degradation. Mediates the autophagic degradation of other substrates including TICAM1. This chain is Tax1-binding protein 1 homolog (Tax1bp1), found in Mus musculus (Mouse).